A 218-amino-acid polypeptide reads, in one-letter code: Cytochrome c biogenesis ATP-binding export protein CcmA (218 aa).

The ABC transporter domain occupies 2–217 (LEAKNLTCIR…KSCLSACCAV (216 aa)). 34–41 (GPNGAGKT) contacts ATP.

This sequence belongs to the ABC transporter superfamily. CcmA exporter (TC 3.A.1.107) family. As to quaternary structure, the complex is composed of two ATP-binding proteins (CcmA) and two transmembrane proteins (CcmB).

The protein resides in the cell inner membrane. The enzyme catalyses heme b(in) + ATP + H2O = heme b(out) + ADP + phosphate + H(+). Functionally, part of the ABC transporter complex CcmAB involved in the biogenesis of c-type cytochromes; once thought to export heme, this seems not to be the case, but its exact role is uncertain. Responsible for energy coupling to the transport system. This Yersinia pestis protein is Cytochrome c biogenesis ATP-binding export protein CcmA.